Reading from the N-terminus, the 204-residue chain is Imidazole glycerol phosphate synthase subunit HisH (204 aa).

The Glutamine amidotransferase type-1 domain occupies 5 to 204 (KVVIIDTGCA…AKLIQNFLEL (200 aa)). Cys80 functions as the Nucleophile in the catalytic mechanism. Active-site residues include His186 and Glu188.

As to quaternary structure, heterodimer of HisH and HisF.

The protein resides in the cytoplasm. The enzyme catalyses 5-[(5-phospho-1-deoxy-D-ribulos-1-ylimino)methylamino]-1-(5-phospho-beta-D-ribosyl)imidazole-4-carboxamide + L-glutamine = D-erythro-1-(imidazol-4-yl)glycerol 3-phosphate + 5-amino-1-(5-phospho-beta-D-ribosyl)imidazole-4-carboxamide + L-glutamate + H(+). It catalyses the reaction L-glutamine + H2O = L-glutamate + NH4(+). It participates in amino-acid biosynthesis; L-histidine biosynthesis; L-histidine from 5-phospho-alpha-D-ribose 1-diphosphate: step 5/9. IGPS catalyzes the conversion of PRFAR and glutamine to IGP, AICAR and glutamate. The HisH subunit catalyzes the hydrolysis of glutamine to glutamate and ammonia as part of the synthesis of IGP and AICAR. The resulting ammonia molecule is channeled to the active site of HisF. In Vibrio parahaemolyticus serotype O3:K6 (strain RIMD 2210633), this protein is Imidazole glycerol phosphate synthase subunit HisH.